Reading from the N-terminus, the 1274-residue chain is RNA-directed RNA polymerase VP2 (1274 aa).

The RdRp catalytic domain occupies 561 to 798; that stretch reads LSTTSGSVVT…KLYALMGCRI (238 aa).

The protein belongs to the reoviridae RNA-directed RNA polymerase family.

The protein resides in the virion. The enzyme catalyses RNA(n) + a ribonucleoside 5'-triphosphate = RNA(n+1) + diphosphate. Its function is as follows. RNA-directed RNA polymerase that is involved in transcription and genome replication. Following infection, it catalyzes the synthesis of fully conservative plus strands. After core assembly, which consists in recruitment of one capped plus-strand for each genomic segments and polymerase complexes, the polymerase switches mode and catalyzes the synthesis of complementary minus-strands. This chain is RNA-directed RNA polymerase VP2 (S2), found in Aquareovirus C (isolate Golden shiner/USA/GSRV/1977) (AQRV-C).